The primary structure comprises 627 residues: Xaa-Pro aminopeptidase 1 (627 aa).

A peptide-binding residues include R88 and H405. D424, D435, and H498 together coordinate Mn(2+). H498, H507, and E533 together coordinate a peptide. Mn(2+)-binding residues include E533 and E547.

Belongs to the peptidase M24B family. Homodimer. Requires Mn(2+) as cofactor.

It localises to the cytoplasm. It is found in the cytosol. It catalyses the reaction Release of any N-terminal amino acid, including proline, that is linked to proline, even from a dipeptide or tripeptide.. Functionally, metalloaminopeptidase that catalyzes the removal of a penultimate prolyl residue from the N-termini of peptides, such as Arg-Pro-Pro. The chain is Xaa-Pro aminopeptidase 1 (xpnpep1) from Dictyostelium discoideum (Social amoeba).